Reading from the N-terminus, the 229-residue chain is Uridylate cyclase (229 aa).

In terms of domain architecture, Guanylate cyclase spans 47 to 178; that stretch reads TVLYADLDGS…RAANYAAKLT (132 aa). Tyrosine 50 contributes to the a ribonucleoside 5'-triphosphate binding site. Mn(2+) is bound by residues aspartate 52 and aspartate 96. Residue arginine 97 participates in a ribonucleoside 5'-triphosphate binding.

The protein belongs to the adenylyl cyclase class-4/guanylyl cyclase family. Pyrimidine cyclase subfamily. In terms of assembly, homodimer. It depends on Mn(2+) as a cofactor.

It is found in the cytoplasm. The catalysed reaction is UTP = 3',5'-cyclic UMP + diphosphate. In terms of biological role, pycsar (pyrimidine cyclase system for antiphage resistance) provides immunity against bacteriophage. The pyrimidine cyclase (PycC) synthesizes cyclic nucleotides in response to infection; these serve as specific second messenger signals. The signals activate the adjacent effector, leading to bacterial cell death and abortive phage infection. A clade B Pycsar system. The pyrimidine cyclase gene of a two-gene Pycsar system, generates cyclic UMP (cUMP) from UTP, has little to no activity on ATP, CTP or GTP. Expression of this and adjacent effector BcPycTIR (AC A0A0J5WTU0) probably confers resistance to bacteriophage. The genes are probably only expressed in response to bacteriophage infection. The protein is Uridylate cyclase of Burkholderia cepacia (Pseudomonas cepacia).